A 149-amino-acid chain; its full sequence is Large ribosomal subunit protein bL9 (149 aa).

Belongs to the bacterial ribosomal protein bL9 family.

Functionally, binds to the 23S rRNA. In Helicobacter pylori (strain G27), this protein is Large ribosomal subunit protein bL9.